The primary structure comprises 492 residues: Serine incorporator 4 (492 aa).

10 helical membrane passes run 59–79, 113–133, 148–168, 179–199, 219–239, 254–274, 281–301, 330–350, 421–441, and 464–484; these read YILLHVGASAICCLLLSKTVV, AVYRVCAGTATFHLLQAVLLV, SFWSLKLLFLLGLCVVAFCIP, IGICGGFTFILLQLVLITAFA, GVSLATLGFYSMAGVGAVLLF, LLSLHLCFCGLLSLLSIAPCI, SGLLQASIISCYIMYLTFSAL, IPDTSVAVFSAGIMYACVLFA, GFHFAFFLASLYVMVTLTNWF, and VASCWACVLLYLGLLLAPLLA.

This sequence belongs to the TDE1 family.

The protein localises to the membrane. In terms of biological role, incorporates a polar amino acid serine into membranes and facilitates the synthesis of two serine-derived lipids, phosphatidylserine and sphingolipids. The chain is Serine incorporator 4 (Serinc4) from Mus musculus (Mouse).